We begin with the raw amino-acid sequence, 154 residues long: Large ribosomal subunit protein uL13 (154 aa).

Belongs to the universal ribosomal protein uL13 family. Part of the 50S ribosomal subunit.

This protein is one of the early assembly proteins of the 50S ribosomal subunit, although it is not seen to bind rRNA by itself. It is important during the early stages of 50S assembly. The polypeptide is Large ribosomal subunit protein uL13 (Rhizobium leguminosarum bv. trifolii (strain WSM2304)).